Reading from the N-terminus, the 173-residue chain is Transcription factor E (173 aa).

The region spanning 3–88 (NNPIIQQVLL…TWRATFTKLP (86 aa)) is the HTH TFE/IIEalpha-type domain.

It belongs to the TFE family. In terms of assembly, monomer. Interaction with RNA polymerase subunits RpoF and RpoE is necessary for Tfe stimulatory transcription activity. Able to interact with Tbp and RNA polymerase in the absence of DNA promoter. Interacts both with the preinitiation and elongation complexes.

Its function is as follows. Transcription factor that plays a role in the activation of archaeal genes transcribed by RNA polymerase. Facilitates transcription initiation by enhancing TATA-box recognition by TATA-box-binding protein (Tbp), and transcription factor B (Tfb) and RNA polymerase recruitment. Not absolutely required for transcription in vitro, but particularly important in cases where Tbp or Tfb function is not optimal. It dynamically alters the nucleic acid-binding properties of RNA polymerases by stabilizing the initiation complex and destabilizing elongation complexes. Seems to translocate with the RNA polymerase following initiation and acts by binding to the non template strand of the transcription bubble in elongation complexes. The sequence is that of Transcription factor E from Methanococcus aeolicus (strain ATCC BAA-1280 / DSM 17508 / OCM 812 / Nankai-3).